A 201-amino-acid polypeptide reads, in one-letter code: ADP-ribosylation factor-like protein 4D (201 aa).

A lipid anchor (N-myristoyl glycine) is attached at Gly-2. GTP-binding positions include 28 to 35 (GLDSAGKT), 76 to 80 (DVGGQ), and 135 to 138 (NKQD).

The protein belongs to the small GTPase superfamily. Arf family. As to quaternary structure, interacts with CYTH2; the interaction is direct and ARL4D GTP-dependent. Does not interact with ARL4D.

Its subcellular location is the nucleus. The protein localises to the nucleolus. It is found in the cell membrane. It localises to the cytoplasm. In terms of biological role, small GTP-binding protein which cycles between an inactive GDP-bound and an active GTP-bound form, and the rate of cycling is regulated by guanine nucleotide exchange factors (GEF) and GTPase-activating proteins (GAP). GTP-binding protein that does not act as an allosteric activator of the cholera toxin catalytic subunit. Recruits CYTH1, CYTH2, CYTH3 and CYTH4 to the plasma membrane in GDP-bound form. This chain is ADP-ribosylation factor-like protein 4D (Arl4d), found in Mus musculus (Mouse).